Here is a 428-residue protein sequence, read N- to C-terminus: GTPase Obg (428 aa).

Residues 1 to 158 (MFVDQVKIYV…RYVTLELKLL (158 aa)) enclose the Obg domain. The OBG-type G domain maps to 159–329 (ADVGLVGFPS…LLFAIADLLE (171 aa)). GTP is bound by residues 165 to 172 (GFPSVGKS), 190 to 194 (FTTIV), 212 to 215 (DLPG), 282 to 285 (NKMD), and 310 to 312 (SAV). Mg(2+) contacts are provided by Ser-172 and Thr-192. In terms of domain architecture, OCT spans 350-428 (KLEKEEAPFH…LLNYEFEFVD (79 aa)).

Belongs to the TRAFAC class OBG-HflX-like GTPase superfamily. OBG GTPase family. Monomer. Requires Mg(2+) as cofactor.

It localises to the cytoplasm. Its function is as follows. An essential GTPase which binds GTP, GDP and possibly (p)ppGpp with moderate affinity, with high nucleotide exchange rates and a fairly low GTP hydrolysis rate. Plays a role in control of the cell cycle, stress response, ribosome biogenesis and in those bacteria that undergo differentiation, in morphogenesis control. The protein is GTPase Obg of Anoxybacillus flavithermus (strain DSM 21510 / WK1).